The primary structure comprises 196 residues: MAILPIRIVGDPVLHEPTETVSESPAELSELIADMYDTMDAANGVGLAANQVGIPLRLFVYDCPDVDETGKPFRRRGCVVNPVLETSERPETMPDPDDDVEGCLSVPGEQFPTGRAEWAKVTGTDADGNAVEIEGRDFFARMLQHEVGHLDGFLYVDMLVGRNARAAKKTIKRAGWGVPGLSWVPGTVEDPFGHDD.

Fe cation contacts are provided by cysteine 103 and histidine 145. Residue glutamate 146 is part of the active site. Histidine 149 contacts Fe cation.

This sequence belongs to the polypeptide deformylase family. Fe(2+) is required as a cofactor.

The enzyme catalyses N-terminal N-formyl-L-methionyl-[peptide] + H2O = N-terminal L-methionyl-[peptide] + formate. Its function is as follows. Removes the formyl group from the N-terminal Met of newly synthesized proteins. Requires at least a dipeptide for an efficient rate of reaction. N-terminal L-methionine is a prerequisite for activity but the enzyme has broad specificity at other positions. The protein is Peptide deformylase of Rhodococcus opacus (strain B4).